The following is a 214-amino-acid chain: uncharacterized protein (214 aa).

An N-terminal signal peptide occupies residues 1 to 24 (MVTPHGILLLTITAAASLLWITFA). A disordered region spans residues 99 to 121 (APNDTQEQNSTRNKRDSESYTAT). Residues 100-109 (PNDTQEQNST) show a composition bias toward polar residues.

Component of the acid-insoluble and acid-soluble organic matrix of the aragonitic skeleton (at protein level).

The protein localises to the secreted. This is an uncharacterized protein from Acropora millepora (Staghorn coral).